We begin with the raw amino-acid sequence, 437 residues long: Vacuolar protein sorting-associated protein 4A (437 aa).

Positions 2–80 (TTSTLQKAID…KDYLRNKEKH (79 aa)) constitute an MIT domain. The residue at position 8 (K8) is an N6-acetyllysine. Positions 15–37 (KATEEDKAKNYEEALRLYQHAVE) form a coiled coil. Positions 75 to 106 (RNKEKHGKKPVKENQSEGKGSDSDSEGDNPEK) are disordered. The segment covering 84-96 (PVKENQSEGKGSD) has biased composition (basic and acidic residues). Phosphoserine is present on residues S95 and S97. 167-174 (GPPGTGKS) contacts ATP.

The protein belongs to the AAA ATPase family. In terms of assembly, proposed to be monomeric or homodimeric in nucleotide-free form and to oligomerize upon binding to ATP to form two stacked hexameric or heptameric rings with a central pore through which ESCRT-III substrates are translocated in an ATP-dependent manner. Interacts with CHMP1A, CHMP1B, CHMP2A, CHMP2B, CHMP3, CHMP4A, CHMP4B, CHMP4C and CHMP6. Interacts with VPS4B; the interaction suggests a heteromeric assembly with VPS4B. Interacts with SPAST. Interacts with IST1. Interacts with ZFYVE19/ANCHR; leading to retain it at midbody. As to expression, highly expressed in testis and moderately in heart and brain. Not detected in spleen, lung, liver, skeletal muscle or kidney.

Its subcellular location is the late endosome membrane. The protein resides in the midbody. The protein localises to the cytoplasm. It localises to the cytoskeleton. It is found in the spindle. The catalysed reaction is ATP + H2O = ADP + phosphate + H(+). Its function is as follows. Involved in late steps of the endosomal multivesicular bodies (MVB) pathway. Recognizes membrane-associated ESCRT-III assemblies and catalyzes their disassembly, possibly in combination with membrane fission. Redistributes the ESCRT-III components to the cytoplasm for further rounds of MVB sorting. MVBs contain intraluminal vesicles (ILVs) that are generated by invagination and scission from the limiting membrane of the endosome and mostly are delivered to lysosomes enabling degradation of membrane proteins, such as stimulated growth factor receptors, lysosomal enzymes and lipids. It is required for proper accomplishment of various processes including the regulation of endosome size, primary cilium organization, mitotic spindle organization and chromosome segregation, and nuclear envelope sealing and spindle disassembly during anaphase. In conjunction with the ESCRT machinery also appears to function in topologically equivalent membrane fission events, such as the terminal stages of cytokinesis. Involved in cytokinesis: retained at the midbody by ZFYVE19/ANCHR and CHMP4C until abscission checkpoint signaling is terminated at late cytokinesis. It is then released following dephosphorylation of CHMP4C, leading to abscission. VPS4A/B are required for the exosomal release of SDCBP, CD63 and syndecan. Critical for normal erythroblast cytokinesis and correct erythropoiesis. This chain is Vacuolar protein sorting-associated protein 4A, found in Mus musculus (Mouse).